The primary structure comprises 363 residues: 3-isopropylmalate dehydrogenase (363 aa).

78–89 (GPKWGTGAVRPE) is a binding site for NAD(+). Positions 96, 106, 135, and 224 each coordinate substrate. Residues D224, D249, and D253 each contribute to the Mg(2+) site. 288 to 299 (GSAPDLPANKVN) lines the NAD(+) pocket.

This sequence belongs to the isocitrate and isopropylmalate dehydrogenases family. As to quaternary structure, homodimer. Mg(2+) serves as cofactor. It depends on Mn(2+) as a cofactor.

It localises to the cytoplasm. The enzyme catalyses (2R,3S)-3-isopropylmalate + NAD(+) = 4-methyl-2-oxopentanoate + CO2 + NADH. It functions in the pathway amino-acid biosynthesis; L-leucine biosynthesis; L-leucine from 3-methyl-2-oxobutanoate: step 3/4. In terms of biological role, catalyzes the oxidation of 3-carboxy-2-hydroxy-4-methylpentanoate (3-isopropylmalate) to 3-carboxy-4-methyl-2-oxopentanoate. The product decarboxylates to 4-methyl-2 oxopentanoate. This chain is 3-isopropylmalate dehydrogenase (LEU2), found in Cyberlindnera jadinii (Torula yeast).